The primary structure comprises 220 residues: NADH-quinone oxidoreductase subunit I (220 aa).

2 consecutive 4Fe-4S ferredoxin-type domains span residues 71–102 and 112–141; these read LQRL…IITH and DSYT…MGNR. [4Fe-4S] cluster-binding residues include cysteine 82, cysteine 85, cysteine 88, cysteine 92, cysteine 121, cysteine 124, cysteine 127, and cysteine 131. Residues 187–220 are disordered; sequence MQATPLDYVQEPSKEESKEETPTRSESHKGDENV. Over residues 198–220 the composition is skewed to basic and acidic residues; that stretch reads PSKEESKEETPTRSESHKGDENV.

It belongs to the complex I 23 kDa subunit family. NDH-1 is composed of 14 different subunits. Subunits NuoA, H, J, K, L, M, N constitute the membrane sector of the complex. The cofactor is [4Fe-4S] cluster.

It is found in the cell inner membrane. It carries out the reaction a quinone + NADH + 5 H(+)(in) = a quinol + NAD(+) + 4 H(+)(out). In terms of biological role, NDH-1 shuttles electrons from NADH, via FMN and iron-sulfur (Fe-S) centers, to quinones in the respiratory chain. The immediate electron acceptor for the enzyme in this species is believed to be ubiquinone. Couples the redox reaction to proton translocation (for every two electrons transferred, four hydrogen ions are translocated across the cytoplasmic membrane), and thus conserves the redox energy in a proton gradient. This is NADH-quinone oxidoreductase subunit I from Helicobacter pylori (strain G27).